The chain runs to 100 residues: Suppressor of silencing 2b (100 aa).

Positions 22 to 27 (KRRRRR) match the Nuclear localization signal motif.

The protein belongs to the cucumovirus/ilarvirus protein 2b family. As to quaternary structure, homotetramer. Interacts with host AGO1; this interaction blocks AGO1 cleavage activity to attenuate RNA silencing and thus counter host defense. Interacts with host JAZ.

Its subcellular location is the host nucleus. Its function is as follows. Multifunctional protein that plays two independent roles: viral suppressor of host RNAi (VSR) and viral inducer of host attractiveness to insect vectors (VIA). Acts as a suppressor of RNA-mediated gene silencing, also known as post-transcriptional gene silencing (PTGS), a mechanism of plant viral defense that limits the accumulation of viral RNAs. May directly interfere with mobile silencing signaling. Also inhibits signal transduction by the phytohormone jasmonate, making the infected plant more attractive to aphids, which are the second host to play a role as a dissemination vector. Acts by binding to and inhibiting JAZ degradation in the host. This is Suppressor of silencing 2b from Cucumis sativus (Cucumber).